A 490-amino-acid polypeptide reads, in one-letter code: GTPase Der (490 aa).

EngA-type G domains lie at P3 to M166 and I200 to T373. GTP contacts are provided by residues G9–S16, D56–I60, N118–D121, G206–S213, D253–V257, and N318–D321. Positions R374–G458 constitute a KH-like domain.

Belongs to the TRAFAC class TrmE-Era-EngA-EngB-Septin-like GTPase superfamily. EngA (Der) GTPase family. Associates with the 50S ribosomal subunit.

In terms of biological role, GTPase that plays an essential role in the late steps of ribosome biogenesis. The polypeptide is GTPase Der (Shewanella halifaxensis (strain HAW-EB4)).